The primary structure comprises 643 residues: 1-deoxy-D-xylulose-5-phosphate synthase (643 aa).

Thiamine diphosphate contacts are provided by residues His-78 and 119 to 121; that span reads AHS. A Mg(2+)-binding site is contributed by Asp-150. Thiamine diphosphate contacts are provided by residues 151–152, Asn-179, Tyr-288, and Glu-370; that span reads GS. Residue Asn-179 coordinates Mg(2+).

This sequence belongs to the transketolase family. DXPS subfamily. As to quaternary structure, homodimer. Mg(2+) serves as cofactor. Thiamine diphosphate is required as a cofactor.

The enzyme catalyses D-glyceraldehyde 3-phosphate + pyruvate + H(+) = 1-deoxy-D-xylulose 5-phosphate + CO2. It participates in metabolic intermediate biosynthesis; 1-deoxy-D-xylulose 5-phosphate biosynthesis; 1-deoxy-D-xylulose 5-phosphate from D-glyceraldehyde 3-phosphate and pyruvate: step 1/1. In terms of biological role, catalyzes the acyloin condensation reaction between C atoms 2 and 3 of pyruvate and glyceraldehyde 3-phosphate to yield 1-deoxy-D-xylulose-5-phosphate (DXP). This is 1-deoxy-D-xylulose-5-phosphate synthase from Brucella abortus (strain 2308).